We begin with the raw amino-acid sequence, 357 residues long: Peptide chain release factor 1 (357 aa).

Q236 carries the N5-methylglutamine modification.

This sequence belongs to the prokaryotic/mitochondrial release factor family. In terms of processing, methylated by PrmC. Methylation increases the termination efficiency of RF1.

The protein resides in the cytoplasm. In terms of biological role, peptide chain release factor 1 directs the termination of translation in response to the peptide chain termination codons UAG and UAA. The chain is Peptide chain release factor 1 from Mycolicibacterium gilvum (strain PYR-GCK) (Mycobacterium gilvum (strain PYR-GCK)).